The sequence spans 420 residues: Mannose-1-phosphate guanylyltransferase regulatory subunit alpha (420 aa).

The substrate-binding domain stretch occupies residues 2–251; it reads LKAVILIGGP…DGIWSQIKSA (250 aa). Residues glutamate 85 and glutamine 247 each coordinate GDP-alpha-D-mannose. Positions 273 to 420 are hexapeptide repeat domain; sequence LAKHTPGGPR…SRSFTNQIIL (148 aa). The segment at 356-384 is C-loop; it reads TPNDPNPNDPRARMDSESLFKDGKLLPAI.

The protein belongs to the transferase hexapeptide repeat family. Component of the GMPPA-GMPPB mannose-1-phosphate guanylyltransferase complex composed of 4 GMPPA subunits and 8 GMPPB subunits; the complex is organized into three layers, a central layer made up of 2 GMPPA dimers sandwiched between two layers each made up of 2 GMPPB dimers.

Its subcellular location is the cytoplasm. In terms of biological role, regulatory subunit of the GMPPA-GMPPB mannose-1-phosphate guanylyltransferase complex; reduces the catalytic activity of GMPPB when part of the complex. Mediates allosteric feedback inhibition of GMPPB catalytic activity upon binding GDP-alpha-D-mannose. Together with GMPPB regulates GDP-alpha-D-mannose levels. The polypeptide is Mannose-1-phosphate guanylyltransferase regulatory subunit alpha (GMPPA) (Papio anubis (Olive baboon)).